The following is a 225-amino-acid chain: Transmembrane emp24 domain-containing protein p24delta11 (225 aa).

An N-terminal signal peptide occupies residues 1–35 (MDLLPSRYKIHKTKLRWILTMMTMMMMMVMRRGES). At 36–193 (MRLDMESGNT…ELNRSTNSRM (158 aa)) the chain is on the lumenal side. The GOLD domain occupies 45-160 (TKCISDDIKT…ITMLEVEVRK (116 aa)). Residues 175 to 188 (LIEREREMQELNRS) adopt a coiled-coil conformation. At Arg-178 the chain carries Omega-N-methylated arginine. N-linked (GlcNAc...) asparagine glycosylation occurs at Asn-186. The helical transmembrane segment at 194-210 (AALSLLSFVVTMSVAGL) threads the bilayer. Residues 211–225 (QLRHLKSFLERKKLL) are Cytoplasmic-facing. The COPII vesicle coat-binding signature appears at 218–219 (FL). The short motif at 218–225 (FLERKKLL) is the COPI vesicle coat-binding element.

Belongs to the EMP24/GP25L family. Probably oligomerizes with other members of the EMP24/GP25L family. Associates with the COPI vesicle coat (coatomer). Associates with the COPII vesicle coat (coatomer).

The protein localises to the endoplasmic reticulum membrane. Its subcellular location is the golgi apparatus. It localises to the cis-Golgi network membrane. It is found in the golgi stack membrane. Functionally, involved in vesicular protein trafficking. Mainly functions in the early secretory pathway. Thought to act as cargo receptor at the lumenal side for incorporation of secretory cargo molecules into transport vesicles and to be involved in vesicle coat formation at the cytoplasmic side. The polypeptide is Transmembrane emp24 domain-containing protein p24delta11 (Arabidopsis thaliana (Mouse-ear cress)).